The primary structure comprises 256 residues: Probable septum site-determining protein MinC (256 aa).

Residues Arg-105 to Thr-143 form a disordered region. Residues Pro-120–Pro-142 are compositionally biased toward low complexity.

The protein belongs to the MinC family. In terms of assembly, interacts with MinD and FtsZ.

In terms of biological role, cell division inhibitor that blocks the formation of polar Z ring septums. Rapidly oscillates between the poles of the cell to destabilize FtsZ filaments that have formed before they mature into polar Z rings. Prevents FtsZ polymerization. This chain is Probable septum site-determining protein MinC, found in Burkholderia vietnamiensis (strain G4 / LMG 22486) (Burkholderia cepacia (strain R1808)).